Reading from the N-terminus, the 527-residue chain is N-acetylglutamate synthase, mitochondrial (527 aa).

The N-terminal 18 residues, 1 to 18 (MATAWVATALRSAAAARR), are a transit peptide targeting the mitochondrion. The interval 14–91 (AAARRLRSPG…PLESPAPPAG (78 aa)) is disordered. Residues 19 to 369 (LRSPGGPGGS…CGTLFKNAER (351 aa)) form an amino-acid kinase domain (AAK) region. The segment covering 54-63 (AHAEDAEGAK) has biased composition (basic and acidic residues). The span at 77-89 (TPLPTPLESPAPP) shows a compositional bias: pro residues. The 152-residue stretch at 368–519 (ERMLRVRNLD…HAKGLPDSFC (152 aa)) folds into the N-acetyltransferase domain. Residues Lys394, Lys437, and 467 to 472 (RSRVTN) contribute to the substrate site.

It belongs to the acetyltransferase family. In terms of assembly, homodimer. Homotetramer. In terms of processing, probably processed by mitochondrial processing peptidase (MPP). The long form has not yet been isolated. Highly expressed in the liver and small intestine. Weakly expressed in the kidney, spleen and testis.

The protein localises to the mitochondrion matrix. It carries out the reaction L-glutamate + acetyl-CoA = N-acetyl-L-glutamate + CoA + H(+). It functions in the pathway amino-acid biosynthesis; L-arginine biosynthesis; N(2)-acetyl-L-ornithine from L-glutamate: step 1/4. Increased by L-arginine. Its function is as follows. Plays a role in the regulation of ureagenesis by producing the essential cofactor N-acetylglutamate (NAG), thus modulating carbamoylphosphate synthase I (CPS1) activity. The polypeptide is N-acetylglutamate synthase, mitochondrial (Nags) (Mus musculus (Mouse)).